Consider the following 134-residue polypeptide: 15.4 kDa class V heat shock protein (134 aa).

The 108-residue stretch at 19 to 126 folds into the sHSP domain; sequence SLNNYQENHV…LIDPSDVPES (108 aa).

The protein belongs to the small heat shock protein (HSP20) family. May form oligomeric structures.

It is found in the cytoplasm. This Arabidopsis thaliana (Mouse-ear cress) protein is 15.4 kDa class V heat shock protein (HSP15.4).